A 129-amino-acid polypeptide reads, in one-letter code: Small ribosomal subunit protein uS8 (129 aa).

Belongs to the universal ribosomal protein uS8 family. Part of the 30S ribosomal subunit. Contacts proteins S5 and S12.

One of the primary rRNA binding proteins, it binds directly to 16S rRNA central domain where it helps coordinate assembly of the platform of the 30S subunit. This Legionella pneumophila (strain Corby) protein is Small ribosomal subunit protein uS8.